Here is a 123-residue protein sequence, read N- to C-terminus: Holo-[acyl-carrier-protein] synthase (123 aa).

The Mg(2+) site is built by Asp8 and Glu56.

The protein belongs to the P-Pant transferase superfamily. AcpS family. Mg(2+) is required as a cofactor.

It localises to the cytoplasm. The catalysed reaction is apo-[ACP] + CoA = holo-[ACP] + adenosine 3',5'-bisphosphate + H(+). Its function is as follows. Transfers the 4'-phosphopantetheine moiety from coenzyme A to a Ser of acyl-carrier-protein. The polypeptide is Holo-[acyl-carrier-protein] synthase (Treponema denticola (strain ATCC 35405 / DSM 14222 / CIP 103919 / JCM 8153 / KCTC 15104)).